The chain runs to 288 residues: Syntaxin-1A (288 aa).

Residues 1–265 (MKDRTQELRT…KYQSKARRKK (265 aa)) are Cytoplasmic-facing. Phosphoserine occurs at positions 14, 64, and 95. A coiled-coil region spans residues 68–109 (DEKTKEELEELMSDIKKTANKVRSKLKSIEQSIEQEEGLNRS). Residue serine 188 is modified to Phosphoserine; by DAPK1. One can recognise a t-SNARE coiled-coil homology domain in the interval 192 to 254 (LSEIETRHSE…ERAVSDTKKA (63 aa)). Glycyl lysine isopeptide (Lys-Gly) (interchain with G-Cter in SUMO) cross-links involve residues lysine 252, lysine 253, and lysine 256. Residues 266–286 (IMIIICCVILGIVIASTVGGI) traverse the membrane as a helical; Anchor for type IV membrane protein segment. Residues 287–288 (FA) lie on the Extracellular side of the membrane.

This sequence belongs to the syntaxin family. In terms of assembly, part of the SNARE core complex containing SNAP25, VAMP2 and STX1A; this complex constitutes the basic catalytic machinery of the complex neurotransmitter release apparatus. The SNARE complex interacts with CPLX1. Interacts with STXBP1. The interaction with STXBP1 promotes assembly of the SNARE complex. Interacts (via C-terminus) with KCNB1 (via C-terminus); the interaction increases in a calcium-dependent manner and induces a pore-independent enhancement of exocytosis in neuroendocrine cells, chromaffin cells, pancreatic beta cells and from the soma of dorsal root ganglia (DRG) neurons. Interacts with SYTL4. Interacts with STXBP6. Interacts with PLCL1 (via C2 domain). Interacts with OTOF. Interacts with LGI3. Interacts (via the H3 domain) with SLC6A4 (via the N-terminus); this interaction regulates SLC4A6 channel conductance in thalamocortical neurons. Interacts with SYT6 and SYT8; the interaction is Ca(2+)-dependent. Interacts with VAMP8. Interacts with SNAP23. Interacts with VAPA and SYBU. Interacts with PRRT2. Interacts with SEPT8. Interacts with STXBP5L. Interacts with synaptotagmin-1/SYT1. Interacts with SEPTIN5; in the cerebellar cortex. Interacts with SEPTIN4; in the striatum. Phosphorylated by CK2. Phosphorylation at Ser-188 by DAPK1 significantly decreases its interaction with STXBP1. Post-translationally, sumoylated, sumoylation is required for regulation of synaptic vesicle endocytosis. As to expression, highly expressed in embryonic spinal cord and ganglia and in adult cerebellum and cerebral cortex. Expressed in heart, liver, fat, skeletal muscle, kidney and brain.

The protein localises to the cytoplasmic vesicle. It localises to the secretory vesicle. It is found in the synaptic vesicle membrane. The protein resides in the synapse. Its subcellular location is the synaptosome. The protein localises to the cell membrane. It localises to the secreted. In terms of biological role, plays an essential role in hormone and neurotransmitter calcium-dependent exocytosis and endocytosis. Part of the SNARE (Soluble NSF Attachment Receptor) complex composed of SNAP25, STX1A and VAMP2 which mediates the fusion of synaptic vesicles with the presynaptic plasma membrane. STX1A and SNAP25 are localized on the plasma membrane while VAMP2 resides in synaptic vesicles. The pairing of the three SNAREs from the N-terminal SNARE motifs to the C-terminal anchors leads to the formation of the SNARE complex, which brings membranes into close proximity and results in final fusion. Participates in the calcium-dependent regulation of acrosomal exocytosis in sperm. Also plays an important role in the exocytosis of hormones such as insulin or glucagon-like peptide 1 (GLP-1). The chain is Syntaxin-1A (STX1A) from Homo sapiens (Human).